Here is a 747-residue protein sequence, read N- to C-terminus: Protein FAM83C (747 aa).

Positions 1-309 are DUF1669; sequence MFGGPGPGVL…LYAESQPVEG (309 aa). Disordered regions lie at residues 322–352, 374–412, 462–484, 517–550, 588–633, 646–672, and 692–715; these read LRPP…SSIK, TGVV…LYRA, LSRF…GRWV, AREV…SPSQ, NQSR…LGHS, GEGP…DEKR, and ARQG…DLVR. The span at 328 to 350 shows a compositional bias: low complexity; it reads ALAFRPDVPSPTSSLPSSTSLSS. Over residues 390–402 the composition is skewed to polar residues; that stretch reads GQPSLHRQLSDPN. The segment covering 697–707 has biased composition (gly residues); sequence EPGGPKGGHLN.

Belongs to the FAM83 family. In terms of assembly, may interact with RAF1. In terms of processing, phosphorylated in vitro by CSNK1A1.

The protein localises to the cytoplasm. May play a role in MAPK signaling. The protein is Protein FAM83C of Homo sapiens (Human).